We begin with the raw amino-acid sequence, 793 residues long: MLKKTLLAYTIGFAFSPPANADGIEIAAVDFDRETLKSLGVDPNISHYFSRSARFLPGEYSLIVSVNGEKKGNIATRFDENGDICLDQAFLQQAGLKIPSEEKNGCYDYILSYPGTTITPLPNQEALDIIVSPQAIIPIGLDLTNAATGGTAALLNYSLMSSRAEFSNGSSDYSQAALEGGININDWMLRSHQFLTQTNGTFSNQNSSTYLQRTFTDLKTLMRAGEVNLNNSVLEGASIYGIEIAPDNALQTSGSGVQVTGIANTSQARVEIRQQGVLIHSILVPAGAFTIPDVPVRNGNSDLNVTVVETDGSSHNYIVPSTLFNQHVESFQGYRFAIGRVDDDYDESPWVISASSGWNLTRWSAMNGGVIVAENYQAASIRSSLVPLPDLTVSSQISTSQDTKDSLQGQKYRLDANYNLPFSLGLTTSLTRSDRHYRELSEAIDDDYTDPTKSTYALGLNWSNSILGGFNISGYKTYSYDGDNDSSNLNINWNKAFKHATVSVNWQHQLSASENNEDDGDLFYVNISIPFGRSNTATLYTRHDDHKTHYGTGVMGVVSDEMSYYVNAERDHDERETSLNGSISSNLHYTQVSLAAGASGSDSRTYNGTMSGGIAVHDQGVTFSPWTINDTFAIAKMDNNIAGVRITSQAGPVWTDFRGNAVIPSIQPWRTSGVEIDTASLPKNVDIGNGTKMIKQGRGAVGKVGFSAITQRRALLNITLSDGKKLPRGVAIEDSEGNYLTTSVDDGVVFLNNIKPDMVLDIKDEQQSCRIHLTFPEDAPKDVFYETATGECQ.

Positions 1-21 (MLKKTLLAYTIGFAFSPPANA) are cleaved as a signal peptide. A disulfide bridge links Cys-769 with Cys-792.

This sequence belongs to the fimbrial export usher family.

Its subcellular location is the cell outer membrane. In terms of biological role, involved in the export and assembly of a fimbrial subunit across the outer membrane. This is an uncharacterized protein from Escherichia coli (strain K12).